The following is a 209-amino-acid chain: Chromophore lyase CpcT/CpeT 1 (209 aa).

The protein belongs to the CpcT/CpeT biliprotein lyase family.

In terms of biological role, covalently attaches a chromophore to Cys residue(s) of phycobiliproteins. This Trichodesmium erythraeum (strain IMS101) protein is Chromophore lyase CpcT/CpeT 1.